We begin with the raw amino-acid sequence, 309 residues long: Olfactory receptor 2G3 (309 aa).

The Extracellular segment spans residues 1-25 (MGLGNESSLMDFILLGFSDHPRLEA). N5 carries N-linked (GlcNAc...) asparagine glycosylation. Residues 26 to 49 (VLFVFVLFFYLLTLVGNFTIIIIS) traverse the membrane as a helical segment. Over 50–57 (YLDPPLHT) the chain is Cytoplasmic. Residues 58-79 (PMYFFLSNLSLLDICFTTSLAP) traverse the membrane as a helical segment. Residues 80-100 (QTLVNLQRPKKTITYGGCVAQ) are Extracellular-facing. A disulfide bridge links C97 with C189. Residues 101-120 (LYISLALGSTECILLADMAL) traverse the membrane as a helical segment. The Cytoplasmic portion of the chain corresponds to 121-139 (DRYIAVCKPLHYVVIMNPR). A helical transmembrane segment spans residues 140 to 158 (LCQQLASISWLSGLASSLI). At 159-195 (HATFTLQLPLCGNHRLDHFICEVPALLKLACVDTTVN) the chain is on the extracellular side. Residues 196-219 (ELVLFVVSVLFVVIPPALISISYG) traverse the membrane as a helical segment. Topologically, residues 220–236 (FITQAVLRIKSVEARHK) are cytoplasmic. A helical transmembrane segment spans residues 237-259 (AFSTCSSHLTVVIIFYGTIIYVY). The Extracellular portion of the chain corresponds to 260 to 272 (LQPSDSYAQDQGK). The chain crosses the membrane as a helical span at residues 273 to 292 (FISLFYTMVTPTLNPIIYTL). The Cytoplasmic segment spans residues 293–309 (RNKDMKEALRKLLSGKL).

It belongs to the G-protein coupled receptor 1 family.

The protein localises to the cell membrane. Odorant receptor. The protein is Olfactory receptor 2G3 (OR2G3) of Homo sapiens (Human).